Reading from the N-terminus, the 145-residue chain is Large ribosomal subunit protein uL15 (145 aa).

The interval 1-42 (MELHTLKATPGSRKAKHRVGRGHAAGKGKQAGRGQSGQTKRS) is disordered. Positions 13–26 (RKAKHRVGRGHAAG) are enriched in basic residues.

The protein belongs to the universal ribosomal protein uL15 family. As to quaternary structure, part of the 50S ribosomal subunit.

Functionally, binds to the 23S rRNA. This is Large ribosomal subunit protein uL15 from Metamycoplasma arthritidis (strain 158L3-1) (Mycoplasma arthritidis).